The primary structure comprises 443 residues: Glucose-6-phosphate isomerase (443 aa).

The active-site Proton donor is E285. Active-site residues include H306 and K420.

It belongs to the GPI family.

It is found in the cytoplasm. The catalysed reaction is alpha-D-glucose 6-phosphate = beta-D-fructose 6-phosphate. Its pathway is carbohydrate biosynthesis; gluconeogenesis. It functions in the pathway carbohydrate degradation; glycolysis; D-glyceraldehyde 3-phosphate and glycerone phosphate from D-glucose: step 2/4. Catalyzes the reversible isomerization of glucose-6-phosphate to fructose-6-phosphate. The protein is Glucose-6-phosphate isomerase of Staphylococcus epidermidis (strain ATCC 12228 / FDA PCI 1200).